Consider the following 225-residue polypeptide: Dimerizing cyclase tstC (225 aa).

The first 19 residues, 1-19, serve as a signal peptide directing secretion; sequence MRLSTLSSLLLGSSSIVFA. N-linked (GlcNAc...) asparagine glycosylation is found at asparagine 146, asparagine 195, and asparagine 217.

This sequence belongs to the dimerizing cyclase tstC family.

It catalyses the reaction 2 [4-(deca-1,8-diyl)-2,5-dioxo-2,5-dihydro-3-furanyl]acetate + H(+) = 2-[(1R,8S,14R,15R)-11-hydroxy-14,15-bis[(6E)-oct-6-en-1-yl]-3,5,9-trioxo-4,10-dioxatetracyclo[9.4.0.0(2,6).0(8,12)]pentadeca-2(6),12-dien-8-yl]acetate + CO2. It functions in the pathway secondary metabolite biosynthesis. In terms of biological role, dimerizing cyclase; part of the gene cluster that mediates the biosynthesis of the antihypercholesterolemic agents phomoidrides which are dimeric anhydrides. Within the pathway, tstC produces the bicyclo[4.3.1]deca-1,6-diene core of phomoidrides via the dimerization of the monomeric anhydrides leading to prephomoidride. The pathway begins with the highly reducing polyketide synthase tstA that catalyzes the formation of a C12-fatty acyl-ACP, starting from one acetate and 5 malonate units. The hydrolase tstM is involved in the release of the C12-fatty acyl chain from phiA. The alkylcitrate synthase (ACS) tstJ and the alkylcitrate dehydratase (ACDH) tstI then give rise to decarboxylated monomeric anhydrides by coupling the C12-fatty acyl chain with oxalacetic acid. The cyclase tstC is responsible for the dimerization of the monomeric anhydrides which leads to the production of prephomoidride that contains the characteristic bicyclo[4.3.1]deca-1,6-diene system of phomoidrides. Iterative oxidation catalyzed by the alpha-ketoglutarate-dependent dioxygenase tstK produced then phomoidride A. Finally, the methyltransferase tstE converts phomoidride A to phomoidride B via an acetalization reaction. The phosphatidylethanolamine-binding protein tstB and tstN are not essential for dimerization and their functions have still to be determined. This Talaromyces stipitatus (strain ATCC 10500 / CBS 375.48 / QM 6759 / NRRL 1006) (Penicillium stipitatum) protein is Dimerizing cyclase tstC.